The following is a 104-amino-acid chain: Large ribosomal subunit protein uL24 (104 aa).

The protein belongs to the universal ribosomal protein uL24 family. Part of the 50S ribosomal subunit.

Functionally, one of two assembly initiator proteins, it binds directly to the 5'-end of the 23S rRNA, where it nucleates assembly of the 50S subunit. In terms of biological role, one of the proteins that surrounds the polypeptide exit tunnel on the outside of the subunit. The polypeptide is Large ribosomal subunit protein uL24 (Maricaulis maris (strain MCS10) (Caulobacter maris)).